A 290-amino-acid polypeptide reads, in one-letter code: Probable branched-chain-amino-acid aminotransferase (290 aa).

The residue at position 155 (K155) is an N6-(pyridoxal phosphate)lysine.

Belongs to the class-IV pyridoxal-phosphate-dependent aminotransferase family. Pyridoxal 5'-phosphate is required as a cofactor.

It catalyses the reaction L-leucine + 2-oxoglutarate = 4-methyl-2-oxopentanoate + L-glutamate. It carries out the reaction L-isoleucine + 2-oxoglutarate = (S)-3-methyl-2-oxopentanoate + L-glutamate. The enzyme catalyses L-valine + 2-oxoglutarate = 3-methyl-2-oxobutanoate + L-glutamate. It participates in amino-acid biosynthesis; L-isoleucine biosynthesis; L-isoleucine from 2-oxobutanoate: step 4/4. It functions in the pathway amino-acid biosynthesis; L-leucine biosynthesis; L-leucine from 3-methyl-2-oxobutanoate: step 4/4. The protein operates within amino-acid biosynthesis; L-valine biosynthesis; L-valine from pyruvate: step 4/4. Acts on leucine, isoleucine and valine. This chain is Probable branched-chain-amino-acid aminotransferase (ilvE), found in Rickettsia conorii (strain ATCC VR-613 / Malish 7).